The primary structure comprises 216 residues: Large ribosomal subunit protein uL3 (216 aa).

The interval 119-143 (GYQGNIHKDGQSRGPMAHGSRYHRR) is disordered.

Belongs to the universal ribosomal protein uL3 family. As to quaternary structure, part of the 50S ribosomal subunit. Forms a cluster with proteins L14 and L19.

One of the primary rRNA binding proteins, it binds directly near the 3'-end of the 23S rRNA, where it nucleates assembly of the 50S subunit. In Levilactobacillus brevis (strain ATCC 367 / BCRC 12310 / CIP 105137 / JCM 1170 / LMG 11437 / NCIMB 947 / NCTC 947) (Lactobacillus brevis), this protein is Large ribosomal subunit protein uL3.